The following is a 300-amino-acid chain: Meiosis-specific cyclin crs1 (300 aa).

A Cyclin N-terminal domain is found at 61-183 (IIEQEKKGLT…VLALLNFDIY (123 aa)).

Belongs to the cyclin family. Cyclin AB subfamily.

The protein resides in the cytoplasm. It localises to the nucleus. Has a role in meiotic chromosome segregation. The polypeptide is Meiosis-specific cyclin crs1 (crs1) (Schizosaccharomyces pombe (strain 972 / ATCC 24843) (Fission yeast)).